Consider the following 306-residue polypeptide: Ectoine dioxygenase (306 aa).

Glutamine 127 serves as a coordination point for L-ectoine. Position 133 (lysine 133) interacts with 2-oxoglutarate. 3 residues coordinate Fe cation: histidine 144, aspartate 146, and histidine 245.

Belongs to the PhyH family. EctD subfamily. Homodimer. The cofactor is Fe(2+).

It carries out the reaction L-ectoine + 2-oxoglutarate + O2 = 5-hydroxyectoine + succinate + CO2. Involved in the biosynthesis of 5-hydroxyectoine, called compatible solute, which helps organisms to survive extreme osmotic stress by acting as a highly soluble organic osmolyte. Catalyzes the 2-oxoglutarate-dependent selective hydroxylation of L-ectoine to yield (4S,5S)-5-hydroxyectoine. The protein is Ectoine dioxygenase of Sphingopyxis alaskensis (strain DSM 13593 / LMG 18877 / RB2256) (Sphingomonas alaskensis).